The primary structure comprises 616 residues: MSEREERRFVEIPRESVRLMAESTGLELSDEVAALLAEDVCYRLREATQNSSQFMKHTKRRKLTVEDFNRALRWSSVEAVCGYGSQEALPLRPAREGDLYFPEDREVSLVELALATNIPKGCAETAVRVHVSYLDGKGNLAPQGSVPSAVSSLTDDLLKYYQQVTRAVLGDDPQLMKVALQDLQTNSKIAALLPYFVYVVSGVKSVSHDLEQLHRLLQVARSLIRNPHLCLGPYVRSLVGSVLYCVLEPLAASINPLNDHWTLRDGAALLLSHIFWTHGDLVSGLYQQILLSLQKVLTDPVRPLCSHYGAVVGLHALGWKAVERVLYPHLPTYWTNLQAVLDDYSVSNAQVKADGHKVYGAILVAVERLLKMKAQAAEPNRGGLGGRGYRPAEDLPWDSLLLQESPPGGSSETGFGSGLPPPSGVAGPEDPSSLTLADIYRELYSFFGDSLATRFGTGQPAPTAPRPPGDKKEPAAAPDSVRKMPQLTASAVVSPQGDESPCGGTLATATAASESRPLPRVHRARGAPRQQGPGAGTRDVFQKSRFAPRGAPHFRFIIAGRQAGRRCRGRLFQTAFPAPYGPSPASRYVQKLPMIGRTGRPARRWALSDYSLYLPL.

Disordered regions lie at residues 399-432 (SLLL…EDPS) and 455-539 (FGTG…GTRD). A phosphoserine mark is found at Ser-494 and Ser-500. Residues Arg-549, Arg-555, and Arg-587 each carry the asymmetric dimethylarginine modification.

It belongs to the TAF6 family. In terms of assembly, the PCAF complex is composed of a number of TBP-associated factors (TAFS), such as TAF5, TAF5L, TAF6, TAF6L, TAF9, TAF10 and TAF12, PCAF, and also PCAF-associated factors (PAFs), such as TADA2L/ADA2, TADA3L/ADA3 and SPT3. Component of the STAGA transcription coactivator-HAT complex, at least composed of SUPT3H, GCN5L2, TAF5L, TAF6L, SUPT7L, TADA3L, TAD1L, TAF10, TAF12, TRRAP and TAF9.

Its subcellular location is the nucleus. Functions as a component of the PCAF complex. The PCAF complex is capable of efficiently acetylating histones in a nucleosomal context. The PCAF complex could be considered as the human version of the yeast SAGA complex. With TAF5L, acts as an epigenetic regulator essential for somatic reprogramming. Regulates target genes through H3K9ac deposition and MYC recruitment which trigger MYC regulatory network to orchestrate gene expression programs to control embryonic stem cell state. Functions with MYC to activate target gene expression through RNA polymerase II pause release. The sequence is that of TAF6-like RNA polymerase II p300/CBP-associated factor-associated factor 65 kDa subunit 6L from Mus musculus (Mouse).